The primary structure comprises 504 residues: Maturase K (504 aa).

This sequence belongs to the intron maturase 2 family. MatK subfamily.

It is found in the plastid. The protein resides in the chloroplast. Its function is as follows. Usually encoded in the trnK tRNA gene intron. Probably assists in splicing its own and other chloroplast group II introns. In Amaranthus caudatus (Love-lies-bleeding), this protein is Maturase K.